The following is a 249-amino-acid chain: 2-C-methyl-D-erythritol 4-phosphate cytidylyltransferase (249 aa).

This sequence belongs to the IspD/TarI cytidylyltransferase family. IspD subfamily.

The enzyme catalyses 2-C-methyl-D-erythritol 4-phosphate + CTP + H(+) = 4-CDP-2-C-methyl-D-erythritol + diphosphate. Its pathway is isoprenoid biosynthesis; isopentenyl diphosphate biosynthesis via DXP pathway; isopentenyl diphosphate from 1-deoxy-D-xylulose 5-phosphate: step 2/6. In terms of biological role, catalyzes the formation of 4-diphosphocytidyl-2-C-methyl-D-erythritol from CTP and 2-C-methyl-D-erythritol 4-phosphate (MEP). This is 2-C-methyl-D-erythritol 4-phosphate cytidylyltransferase from Shewanella oneidensis (strain ATCC 700550 / JCM 31522 / CIP 106686 / LMG 19005 / NCIMB 14063 / MR-1).